Reading from the N-terminus, the 302-residue chain is 4-hydroxy-tetrahydrodipicolinate synthase (302 aa).

T55 contributes to the pyruvate binding site. Residue Y143 is the Proton donor/acceptor of the active site. K171 (schiff-base intermediate with substrate) is an active-site residue. I213 is a binding site for pyruvate.

The protein belongs to the DapA family. In terms of assembly, homotetramer; dimer of dimers.

The protein resides in the cytoplasm. The enzyme catalyses L-aspartate 4-semialdehyde + pyruvate = (2S,4S)-4-hydroxy-2,3,4,5-tetrahydrodipicolinate + H2O + H(+). It functions in the pathway amino-acid biosynthesis; L-lysine biosynthesis via DAP pathway; (S)-tetrahydrodipicolinate from L-aspartate: step 3/4. Its function is as follows. Catalyzes the condensation of (S)-aspartate-beta-semialdehyde [(S)-ASA] and pyruvate to 4-hydroxy-tetrahydrodipicolinate (HTPA). The polypeptide is 4-hydroxy-tetrahydrodipicolinate synthase (Psychrobacter sp. (strain PRwf-1)).